We begin with the raw amino-acid sequence, 343 residues long: Protein RecA (343 aa).

66 to 73 contacts ATP; that stretch reads GPESSGKT.

Belongs to the RecA family.

It localises to the cytoplasm. Functionally, can catalyze the hydrolysis of ATP in the presence of single-stranded DNA, the ATP-dependent uptake of single-stranded DNA by duplex DNA, and the ATP-dependent hybridization of homologous single-stranded DNAs. It interacts with LexA causing its activation and leading to its autocatalytic cleavage. This chain is Protein RecA, found in Rickettsia bellii (strain OSU 85-389).